The sequence spans 611 residues: Glutamine--fructose-6-phosphate aminotransferase [isomerizing] (611 aa).

The active-site Nucleophile; for GATase activity is the Cys-2. One can recognise a Glutamine amidotransferase type-2 domain in the interval 2-219; sequence CGIVGAVAER…EGDIAEIRRD (218 aa). SIS domains lie at 287-427 and 460-601; these read AAEL…VKGS and VAEL…VDQP. Lys-606 acts as the For Fru-6P isomerization activity in catalysis.

As to quaternary structure, homodimer.

It is found in the cytoplasm. The enzyme catalyses D-fructose 6-phosphate + L-glutamine = D-glucosamine 6-phosphate + L-glutamate. Its function is as follows. Catalyzes the first step in hexosamine metabolism, converting fructose-6P into glucosamine-6P using glutamine as a nitrogen source. This is Glutamine--fructose-6-phosphate aminotransferase [isomerizing] from Pseudomonas syringae pv. tomato (strain ATCC BAA-871 / DC3000).